A 675-amino-acid polypeptide reads, in one-letter code: Methionine--tRNA ligase (675 aa).

Residues 15–25 carry the 'HIGH' region motif; it reads PYANGSIHLGH. Residues Cys146, Cys149, Cys159, and Cys162 each contribute to the Zn(2+) site. The 'KMSKS' region signature appears at 332–336; the sequence is KMSKS. Lys335 is a binding site for ATP. Residues 573-675 form the tRNA-binding domain; that stretch reads DFAKVDMRIA…SGAQPGMQVK (103 aa).

This sequence belongs to the class-I aminoacyl-tRNA synthetase family. MetG type 1 subfamily. Homodimer. Zn(2+) serves as cofactor.

Its subcellular location is the cytoplasm. The enzyme catalyses tRNA(Met) + L-methionine + ATP = L-methionyl-tRNA(Met) + AMP + diphosphate. Functionally, is required not only for elongation of protein synthesis but also for the initiation of all mRNA translation through initiator tRNA(fMet) aminoacylation. In Serratia proteamaculans (strain 568), this protein is Methionine--tRNA ligase.